The primary structure comprises 1199 residues: Ecdysone-induced protein 75B, isoforms C/D (1199 aa).

Residues 130-182 (TTDGPTAVLQQQQPQQQMPQHFESLPHHHPQQEHQPQQQQQQHHLQHHPHPHV) are disordered. Composition is skewed to low complexity over residues 139–149 (QQQQPQQQMPQ) and 162–172 (EHQPQQQQQQH). The segment at residues 242–318 (TVLCRVCGDK…VGMSRDAVRF (77 aa)) is a DNA-binding region (nuclear receptor). 2 NR C4-type zinc fingers span residues 245–265 (CRVCGDKASGFHYGVHSCEGC) and 282–306 (CTKNQQCSILRINRNRCQYCRLKKC). Residues 352-600 (DQPRLLAAVL…QQMWSMEDGN (249 aa)) form the NR LBD domain. Disordered regions lie at residues 624-665 (KSPL…SALA), 771-808 (LDSPTDSGIESGNEKNECKAVSSGGSSSCSSPRSSVDD), 831-851 (VSVSPVRSPQPSTSSHLKRQI), 895-961 (AEAD…SSHS), 991-1104 (ENST…SNSA), and 1155-1188 (VTVTASNGGPPSAAASPAPSSSPPASVGSPNPGL). Low complexity-rich tracts occupy residues 641–653 (GSPSSSQPQGVSL), 792–804 (SSGGSSSCSSPRS), 831–845 (VSVSPVRSPQPSTSS), 897–942 (ADAS…AQSQ), and 950–961 (SSPKASMASSHS). 2 stretches are compositionally biased toward polar residues: residues 993–1006 (STAASSTTNGVGNR) and 1018–1040 (AVQNQQRWGSSSVITTTCQQRQQ). Low complexity-rich tracts occupy residues 1041–1077 (SVSPHSNGSSSSSSSSSSSSSSSSSTSSNCSSSSASS), 1086–1104 (STSNGTSAPASSSSGSNSA), and 1159–1187 (ASNGGPPSAAASPAPSSSPPASVGSPNPG).

Belongs to the nuclear hormone receptor family. NR1 subfamily.

The protein localises to the nucleus. In terms of biological role, implicated in the regulation of ecdysone-triggered gene hierarchies. Probably plays a key role in mediating the regulation of the larval molt by 20-OH-ecdysone. The chain is Ecdysone-induced protein 75B, isoforms C/D (Eip75B) from Drosophila melanogaster (Fruit fly).